The sequence spans 62 residues: Photosystem II reaction center protein Z (62 aa).

A run of 2 helical transmembrane segments spans residues 8–28 (ALLL…VLYA) and 41–61 (LVGG…NYFV).

The protein belongs to the PsbZ family. In terms of assembly, PSII is composed of 1 copy each of membrane proteins PsbA, PsbB, PsbC, PsbD, PsbE, PsbF, PsbH, PsbI, PsbJ, PsbK, PsbL, PsbM, PsbT, PsbX, PsbY, PsbZ, Psb30/Ycf12, peripheral proteins PsbO, CyanoQ (PsbQ), PsbU, PsbV and a large number of cofactors. It forms dimeric complexes.

It localises to the cellular thylakoid membrane. In terms of biological role, may control the interaction of photosystem II (PSII) cores with the light-harvesting antenna, regulates electron flow through the 2 photosystem reaction centers. PSII is a light-driven water plastoquinone oxidoreductase, using light energy to abstract electrons from H(2)O, generating a proton gradient subsequently used for ATP formation. The chain is Photosystem II reaction center protein Z from Synechococcus elongatus (strain ATCC 33912 / PCC 7942 / FACHB-805) (Anacystis nidulans R2).